Consider the following 704-residue polypeptide: Elongation factor G (704 aa).

The tr-type G domain maps to 6-282 (NKVRNIGIMA…AVIDYLPTPL (277 aa)). GTP-binding positions include 15-22 (AHIDAGKT), 79-83 (DTPGH), and 133-136 (NKMD).

This sequence belongs to the TRAFAC class translation factor GTPase superfamily. Classic translation factor GTPase family. EF-G/EF-2 subfamily.

It is found in the cytoplasm. Catalyzes the GTP-dependent ribosomal translocation step during translation elongation. During this step, the ribosome changes from the pre-translocational (PRE) to the post-translocational (POST) state as the newly formed A-site-bound peptidyl-tRNA and P-site-bound deacylated tRNA move to the P and E sites, respectively. Catalyzes the coordinated movement of the two tRNA molecules, the mRNA and conformational changes in the ribosome. This chain is Elongation factor G, found in Corynebacterium diphtheriae (strain ATCC 700971 / NCTC 13129 / Biotype gravis).